Reading from the N-terminus, the 76-residue chain is ATP synthase subunit 9, mitochondrial (76 aa).

Met1 is subject to N-formylmethionine. Helical transmembrane passes span 14–34 and 52–72; these read ISTIGLLGAGIGIAIVFAALI and ILGFALSEATGLFCLMVSFLL.

The protein belongs to the ATPase C chain family. F-type ATPases have 2 components, CF(1) - the catalytic core - and CF(0) - the membrane proton channel. In yeast, the dimeric form of ATP synthase consists of 18 polypeptides: alpha, beta, gamma, delta, epsilon, 4 (B), 5 (OSCP), 6 (A), 8, 9 (C), d, E (Tim11), f, g, h, i, j and k.

It is found in the mitochondrion membrane. Mitochondrial membrane ATP synthase (F(1)F(0) ATP synthase or Complex V) produces ATP from ADP in the presence of a proton gradient across the membrane which is generated by electron transport complexes of the respiratory chain. F-type ATPases consist of two structural domains, F(1) - containing the extramembraneous catalytic core and F(0) - containing the membrane proton channel, linked together by a central stalk and a peripheral stalk. During catalysis, ATP synthesis in the catalytic domain of F(1) is coupled via a rotary mechanism of the central stalk subunits to proton translocation. Part of the complex F(0) domain. A homomeric c-ring of probably 10 subunits is part of the complex rotary element. The chain is ATP synthase subunit 9, mitochondrial (ATP9) from Saccharomyces paradoxus (Yeast).